The primary structure comprises 93 residues: HssA/B-like protein 23 (93 aa).

It belongs to the hssA/B family.

In Dictyostelium discoideum (Social amoeba), this protein is HssA/B-like protein 23 (hssl23).